The chain runs to 459 residues: MQIQFHLYNTLSRTKEVFNPQDQANVKMYVCGPTVYDNPHIGNGRSGVVYDLLYRIVIKIFGEKTVKYVRNITNVDDKIIDRAELLGVTIDELTDKVTKEFHKNMAYLGCMLPSIEPKATKHTDVMIAIIERLIAKEHAYVVDNHVYFDVLSAPNYTELSNRSLEEMFEGVHVENSKTKKNPQDFVLWKPAKQNESANMNFESPWGLGRPGWHIECSAMSYKYLGENFDIHGGGADLIFPHHTNEIAQSRCAFPSSTYAKYWVHNGFLTVNGEKMSKSLGNFITIRDLMDKQIQGEVVRLFLLSSHYRRPLDYNDKAIEDAKKTLDYWYRAIENINVQKIDLPHDFMQSLLDDMNTPLAVKIINDYAKGVFISKTEEERQLNASAIITCANFIGLMNKTPHEWFNSGVDELYINEFVNKRLEAKKQKNWLLADQIRNQLLEEKIILEDQPDGTTIWRKE.

Residue Cys-31 coordinates Zn(2+). The 'HIGH' region signature appears at 33-43 (PTVYDNPHIGN). Residues Cys-216, His-241, and Glu-245 each contribute to the Zn(2+) site. Residues 274–278 (KMSKS) carry the 'KMSKS' region motif. Residue Lys-277 coordinates ATP.

Belongs to the class-I aminoacyl-tRNA synthetase family. As to quaternary structure, monomer. Requires Zn(2+) as cofactor.

It is found in the cytoplasm. It carries out the reaction tRNA(Cys) + L-cysteine + ATP = L-cysteinyl-tRNA(Cys) + AMP + diphosphate. The polypeptide is Cysteine--tRNA ligase (Rickettsia massiliae (strain Mtu5)).